We begin with the raw amino-acid sequence, 206 residues long: FMN-dependent NADH:quinone oxidoreductase (206 aa).

FMN-binding positions include S9, 15 to 17, 95 to 98, and 139 to 142; these read SVS, MYNF, and SRGG.

This sequence belongs to the azoreductase type 1 family. In terms of assembly, homodimer. FMN is required as a cofactor.

It catalyses the reaction 2 a quinone + NADH + H(+) = 2 a 1,4-benzosemiquinone + NAD(+). The enzyme catalyses N,N-dimethyl-1,4-phenylenediamine + anthranilate + 2 NAD(+) = 2-(4-dimethylaminophenyl)diazenylbenzoate + 2 NADH + 2 H(+). Its function is as follows. Quinone reductase that provides resistance to thiol-specific stress caused by electrophilic quinones. Functionally, also exhibits azoreductase activity. Catalyzes the reductive cleavage of the azo bond in aromatic azo compounds to the corresponding amines. The protein is FMN-dependent NADH:quinone oxidoreductase of Legionella pneumophila subsp. pneumophila (strain Philadelphia 1 / ATCC 33152 / DSM 7513).